The sequence spans 203 residues: Peptide deformylase (203 aa).

Residues cysteine 121 and histidine 163 each coordinate Fe cation. Residue glutamate 164 is part of the active site. Histidine 167 is a Fe cation binding site.

Belongs to the polypeptide deformylase family. Requires Fe(2+) as cofactor.

The catalysed reaction is N-terminal N-formyl-L-methionyl-[peptide] + H2O = N-terminal L-methionyl-[peptide] + formate. Functionally, removes the formyl group from the N-terminal Met of newly synthesized proteins. Requires at least a dipeptide for an efficient rate of reaction. N-terminal L-methionine is a prerequisite for activity but the enzyme has broad specificity at other positions. This Prochlorococcus marinus (strain MIT 9515) protein is Peptide deformylase.